The chain runs to 363 residues: Flagellar P-ring protein (363 aa).

Positions 1–20 (MKIKVLLAVALLAMTVPVKA) are cleaved as a signal peptide.

The protein belongs to the FlgI family. The basal body constitutes a major portion of the flagellar organelle and consists of four rings (L,P,S, and M) mounted on a central rod.

Its subcellular location is the periplasm. The protein localises to the bacterial flagellum basal body. Functionally, assembles around the rod to form the L-ring and probably protects the motor/basal body from shearing forces during rotation. In Shewanella amazonensis (strain ATCC BAA-1098 / SB2B), this protein is Flagellar P-ring protein.